A 435-amino-acid chain; its full sequence is Fibrous sheath-interacting protein 1 (435 aa).

Disordered regions lie at residues 1-109 (MPMD…DPKL) and 354-393 (SQSH…ESRL). Over residues 18-32 (SSSRSRPGSRSSNGS) the composition is skewed to low complexity. A compositionally biased stretch (polar residues) spans 50–63 (KLNSGQEGHTSNSG). A compositionally biased stretch (basic and acidic residues) spans 64 to 87 (VEERRNSNDAKWADDSKTKPAKES). Phosphoserine is present on residues Ser87 and Ser88. Residues 108–154 (KLEETNAVLQNAIRKMHRLDKLLAKKQCREKEVKKQGLEMRVKLWEE) are a coiled coil. 2 stretches are compositionally biased toward basic and acidic residues: residues 355-371 (QSHK…ERNT) and 378-393 (KILR…ESRL).

This sequence belongs to the FSIP1 family. As to quaternary structure, may interact with AKAP4. In terms of tissue distribution, detected in male germ cells and testis.

The protein is Fibrous sheath-interacting protein 1 (Fsip1) of Mus musculus (Mouse).